We begin with the raw amino-acid sequence, 95 residues long: Aspartyl/glutamyl-tRNA(Asn/Gln) amidotransferase subunit C (95 aa).

The protein belongs to the GatC family. Heterotrimer of A, B and C subunits.

It carries out the reaction L-glutamyl-tRNA(Gln) + L-glutamine + ATP + H2O = L-glutaminyl-tRNA(Gln) + L-glutamate + ADP + phosphate + H(+). The enzyme catalyses L-aspartyl-tRNA(Asn) + L-glutamine + ATP + H2O = L-asparaginyl-tRNA(Asn) + L-glutamate + ADP + phosphate + 2 H(+). Functionally, allows the formation of correctly charged Asn-tRNA(Asn) or Gln-tRNA(Gln) through the transamidation of misacylated Asp-tRNA(Asn) or Glu-tRNA(Gln) in organisms which lack either or both of asparaginyl-tRNA or glutaminyl-tRNA synthetases. The reaction takes place in the presence of glutamine and ATP through an activated phospho-Asp-tRNA(Asn) or phospho-Glu-tRNA(Gln). This chain is Aspartyl/glutamyl-tRNA(Asn/Gln) amidotransferase subunit C, found in Desulforapulum autotrophicum (strain ATCC 43914 / DSM 3382 / VKM B-1955 / HRM2) (Desulfobacterium autotrophicum).